A 468-amino-acid polypeptide reads, in one-letter code: UDP-N-acetylmuramoyl-L-alanine--L-glutamate ligase (468 aa).

Glycine 122–threonine 128 serves as a coordination point for ATP.

The protein belongs to the MurCDEF family. MurD2 subfamily.

The protein resides in the cytoplasm. The enzyme catalyses UDP-N-acetyl-alpha-D-muramoyl-L-alanine + L-glutamate + ATP = UDP-N-acetyl-alpha-D-muramoyl-L-alanyl-L-glutamate + ADP + phosphate + H(+). The protein operates within cell wall biogenesis; peptidoglycan biosynthesis. In terms of biological role, cell wall formation. Catalyzes the addition of L-glutamate to the nucleotide precursor UDP-N-acetylmuramoyl-L-alanine. The sequence is that of UDP-N-acetylmuramoyl-L-alanine--L-glutamate ligase from Xylella fastidiosa (strain Temecula1 / ATCC 700964).